The sequence spans 422 residues: Interleukin-11 receptor subunit alpha (422 aa).

A signal peptide spans 1 to 22 (MSSSCSGLSRVLVAVATALVSA). Over 24–370 (SPCPQAWGPP…DSVEQVAVLV (347 aa)) the chain is Extracellular. The Ig-like C2-type domain occupies 27 to 110 (PQAWGPPGVQ…LGGTVTLQLG (84 aa)). 3 cysteine pairs are disulfide-bonded: cysteine 48–cysteine 94, cysteine 120–cysteine 130, and cysteine 170–cysteine 180. Fibronectin type-III domains are found at residues 112-219 (PPAR…LRPD) and 220-317 (PPQG…TPST). The N-linked (GlcNAc...) asparagine glycan is linked to asparagine 127. N-linked (GlcNAc...) asparagine glycosylation is present at asparagine 194. A WSXWS motif motif is present at residues 304–308 (WSTWS). Positions 335–355 (EVEPQVDSPAPPRPSLQPHPR) are disordered. Residues 371 to 391 (SLGILSFLGLVAGALALGLWL) form a helical membrane-spanning segment. Residues 392–422 (RLRRGGKDGSPKPGFLASVIPVDRHPGAPNL) lie on the Cytoplasmic side of the membrane.

This sequence belongs to the type I cytokine receptor family. Type 3 subfamily. In terms of assembly, on IL11 binding, forms a multimer complex with IL6ST/gp130. In terms of processing, a short soluble form is also released from the membrane by proteolysis. The sIL11RA is formed either by limited proteolysis of membrane-bound receptors, a process referred to as ectodomain shedding, or directly secreted from the cells after alternative mRNA splicing. mIL11RA is cleaved by the proteases ADAM10, ELANE and PRTN3.

It is found in the membrane. Its subcellular location is the secreted. Receptor for interleukin-11 (IL11). The receptor systems for IL6, LIF, OSM, CNTF, IL11 and CT1 can utilize IL6ST for initiating signal transmission. The IL11/IL11RA/IL6ST complex may be involved in the control of proliferation and/or differentiation of skeletogenic progenitor or other mesenchymal cells. Essential for the normal development of craniofacial bones and teeth. Restricts suture fusion and tooth number. Its function is as follows. Soluble form of IL11 receptor (sIL11RA) that acts as an agonist of IL11 activity. The IL11:sIL11RA complex binds to IL6ST/gp130 on cell surfaces and induces signaling also on cells that do not express membrane-bound IL11RA in a process called IL11 trans-signaling. The protein is Interleukin-11 receptor subunit alpha (IL11RA) of Pongo abelii (Sumatran orangutan).